Consider the following 141-residue polypeptide: Single-stranded DNA-binding protein 2 (141 aa).

Positions 1-104 constitute an SSB domain; sequence MLNRTVLVGR…VVADSVQFLE (104 aa). Positions 104–141 are disordered; sequence EPKNNNQQQNNNYQQQRQTQTGNNPFDNNADSIEDLPF. Positions 107 to 127 are enriched in low complexity; the sequence is NNNQQQNNNYQQQRQTQTGNN.

As to quaternary structure, homotetramer.

The chain is Single-stranded DNA-binding protein 2 (ssb-p) from Staphylococcus aureus (strain Mu50 / ATCC 700699).